The primary structure comprises 600 residues: Glutamine--fructose-6-phosphate aminotransferase [isomerizing] (600 aa).

Cys2 functions as the Nucleophile; for GATase activity in the catalytic mechanism. One can recognise a Glutamine amidotransferase type-2 domain in the interval 2 to 217 (CGIVGFIGEQ…DKEIVIVMKE (216 aa)). 2 SIS domains span residues 283–422 (IRNA…AKGE) and 452–590 (LAKQ…VDKP). The active-site For Fru-6P isomerization activity is the Lys595.

Homodimer.

The protein localises to the cytoplasm. It carries out the reaction D-fructose 6-phosphate + L-glutamine = D-glucosamine 6-phosphate + L-glutamate. Catalyzes the first step in hexosamine metabolism, converting fructose-6P into glucosamine-6P using glutamine as a nitrogen source. The polypeptide is Glutamine--fructose-6-phosphate aminotransferase [isomerizing] (Bacillus thuringiensis subsp. konkukian (strain 97-27)).